The following is a 160-amino-acid chain: SsrA-binding protein (160 aa).

It belongs to the SmpB family.

The protein localises to the cytoplasm. In terms of biological role, required for rescue of stalled ribosomes mediated by trans-translation. Binds to transfer-messenger RNA (tmRNA), required for stable association of tmRNA with ribosomes. tmRNA and SmpB together mimic tRNA shape, replacing the anticodon stem-loop with SmpB. tmRNA is encoded by the ssrA gene; the 2 termini fold to resemble tRNA(Ala) and it encodes a 'tag peptide', a short internal open reading frame. During trans-translation Ala-aminoacylated tmRNA acts like a tRNA, entering the A-site of stalled ribosomes, displacing the stalled mRNA. The ribosome then switches to translate the ORF on the tmRNA; the nascent peptide is terminated with the 'tag peptide' encoded by the tmRNA and targeted for degradation. The ribosome is freed to recommence translation, which seems to be the essential function of trans-translation. This Nocardia farcinica (strain IFM 10152) protein is SsrA-binding protein.